A 91-amino-acid polypeptide reads, in one-letter code: uncharacterized protein (91 aa).

An N-terminal signal peptide occupies residues 1–21 (MKIISKMLVGALALAVTNVYA).

The protein belongs to the BhsA/McbA family.

It localises to the periplasm. This is an uncharacterized protein from Escherichia coli (strain K12).